The primary structure comprises 598 residues: MSDLSHIRNFSIIAHIDHGKSTLADRFIQMCGGLTEREMEAQVLDSMDLERERGITIKAHSVTLYYKAKDGITYQLNFIDTPGHVDFTYEVSRSLAACEGALLVVDAGQGVEAQSVANCYTAIEQGLEVMPVLNKMDLPQADPDRVKEEIEKIIGIDATDAVACSAKSGMGVDEVLERLVATIPAPTGNIEDPLQALIIDSWFDNYLGVVSLVRVRHGRVKKGDKILVKSTGKLHLVDSVGVFNPKHSATVDLKAGEVGFIIAGIKDIHGAPVGDTLTLSTTPDVDVLPGFKRIQPQVYAGLFPVSSDDFEDFREALQKLTLNDSSLQYLPESSDALGFGFRCGFLGMLHMEIIQERLEREYNLDLITTAPTVIFELLLKTGETIYVDNPSKLPDLSAIEDMREPIVRANILVPQEHLGNVITLCIEKRGVQHDMLFLGTQVQVSYDLPMNEVVLDFFDRLKSVSRGYASLDYHFDRYQSANLVKLDVLINAEKVDALALIVHRDNAHYKGRALTEKMKELIPRQMFDVAIQAAIGGQIVARTTVKALRKNVLAKCYGGDVSRKRKLLEKQKAGKKRMKQVGNVEIPQEAFLAVLRLE.

Residues 5 to 187 (SHIRNFSIIA…RLVATIPAPT (183 aa)) enclose the tr-type G domain. GTP contacts are provided by residues 17–22 (DHGKST) and 134–137 (NKMD).

The protein belongs to the TRAFAC class translation factor GTPase superfamily. Classic translation factor GTPase family. LepA subfamily.

It localises to the cell inner membrane. It carries out the reaction GTP + H2O = GDP + phosphate + H(+). Required for accurate and efficient protein synthesis under certain stress conditions. May act as a fidelity factor of the translation reaction, by catalyzing a one-codon backward translocation of tRNAs on improperly translocated ribosomes. Back-translocation proceeds from a post-translocation (POST) complex to a pre-translocation (PRE) complex, thus giving elongation factor G a second chance to translocate the tRNAs correctly. Binds to ribosomes in a GTP-dependent manner. The chain is Elongation factor 4 from Pseudomonas syringae pv. syringae (strain B728a).